Consider the following 405-residue polypeptide: Cytoplasmic tRNA 2-thiolation protein 2 (405 aa).

This sequence belongs to the CTU2/NCS2 family.

It is found in the cytoplasm. Its pathway is tRNA modification; 5-methoxycarbonylmethyl-2-thiouridine-tRNA biosynthesis. In terms of biological role, plays a central role in 2-thiolation of mcm(5)S(2)U at tRNA wobble positions of tRNA(Lys), tRNA(Glu) and tRNA(Gln). May act by forming a heterodimer with NCS6/CTU1 that ligates sulfur from thiocarboxylated URM1 onto the uridine of tRNAs at wobble position. This chain is Cytoplasmic tRNA 2-thiolation protein 2, found in Drosophila pseudoobscura pseudoobscura (Fruit fly).